Reading from the N-terminus, the 594-residue chain is Putative phospholipase B-like 2 (594 aa).

The signal sequence occupies residues 1 to 46; it reads MAAPVDGSSGGWAARALRRALALTSLTTLALLASLTGLLLSGPAGA. N-linked (GlcNAc...) asparagine glycosylation is found at asparagine 93 and asparagine 115. Cysteines 147 and 157 form a disulfide. 2 N-linked (GlcNAc...) asparagine glycosylation sites follow: asparagine 236 and asparagine 441. A disulfide bond links cysteine 497 and cysteine 500. N-linked (GlcNAc...) asparagine glycosylation occurs at asparagine 520.

The protein belongs to the phospholipase B-like family. In terms of assembly, interacts with IGF2R. Post-translationally, the p76 protein is synthesized as a 76 kDa precursor which is then processed into a N-terminal 28 kDa form and a C-terminal 40 kDa form. The C-terminal peptide is further processed into a 15 kDa form. Glycosylated; contains mannose 6-phosphate sugars. Present at highest levels in spleen, lung and brain (at protein level).

The protein resides in the lysosome lumen. Putative phospholipase. The protein is Putative phospholipase B-like 2 (Plbd2) of Mus musculus (Mouse).